The sequence spans 298 residues: MTSSHNNLLQNFQEYLSVEKGLSDNSIYSYGYDLNKFKNFLEKEHIDFLKVQADDIMRFLNEEKDRKISSKTIAREVVAIRQFYKFLKDEKKLDTNPTEKIETPEVMRSIPDYLTQDEIEELFASIKEDNLYELRDKCIFELLYSSGLRISEACNLRLNDMDLEGMTLTVEGKGGRQRLVPFGEKSLDILNRYLKQSRPFILKSRNCEYLFVSKKGSYINRKSVWRLLNHYIKRTSILKKVTPHTLRHSFATHLLENHADLKSVQELLGHIDIATTQIYTHMANKTLREVHKKFHPRG.

Positions 3–88 (SSHNNLLQNF…AIRQFYKFLK (86 aa)) constitute a Core-binding (CB) domain. The region spanning 109-292 (SIPDYLTQDE…ANKTLREVHK (184 aa)) is the Tyr recombinase domain. Residues arginine 149, lysine 173, histidine 244, arginine 247, and histidine 270 contribute to the active site. The active-site O-(3'-phospho-DNA)-tyrosine intermediate is tyrosine 279.

The protein belongs to the 'phage' integrase family. XerD subfamily. As to quaternary structure, forms a cyclic heterotetrameric complex composed of two molecules of XerC and two molecules of XerD.

It is found in the cytoplasm. Site-specific tyrosine recombinase, which acts by catalyzing the cutting and rejoining of the recombining DNA molecules. The XerC-XerD complex is essential to convert dimers of the bacterial chromosome into monomers to permit their segregation at cell division. It also contributes to the segregational stability of plasmids. The protein is Tyrosine recombinase XerD of Leptospira interrogans serogroup Icterohaemorrhagiae serovar copenhageni (strain Fiocruz L1-130).